A 173-amino-acid chain; its full sequence is Crossover junction endodeoxyribonuclease RuvC (173 aa).

Catalysis depends on residues aspartate 8, glutamate 67, and aspartate 139. Residues aspartate 8, glutamate 67, and aspartate 139 each contribute to the Mg(2+) site.

This sequence belongs to the RuvC family. In terms of assembly, homodimer which binds Holliday junction (HJ) DNA. The HJ becomes 2-fold symmetrical on binding to RuvC with unstacked arms; it has a different conformation from HJ DNA in complex with RuvA. In the full resolvosome a probable DNA-RuvA(4)-RuvB(12)-RuvC(2) complex forms which resolves the HJ. Mg(2+) is required as a cofactor.

The protein localises to the cytoplasm. It carries out the reaction Endonucleolytic cleavage at a junction such as a reciprocal single-stranded crossover between two homologous DNA duplexes (Holliday junction).. Functionally, the RuvA-RuvB-RuvC complex processes Holliday junction (HJ) DNA during genetic recombination and DNA repair. Endonuclease that resolves HJ intermediates. Cleaves cruciform DNA by making single-stranded nicks across the HJ at symmetrical positions within the homologous arms, yielding a 5'-phosphate and a 3'-hydroxyl group; requires a central core of homology in the junction. The consensus cleavage sequence is 5'-(A/T)TT(C/G)-3'. Cleavage occurs on the 3'-side of the TT dinucleotide at the point of strand exchange. HJ branch migration catalyzed by RuvA-RuvB allows RuvC to scan DNA until it finds its consensus sequence, where it cleaves and resolves the cruciform DNA. The polypeptide is Crossover junction endodeoxyribonuclease RuvC (Shewanella putrefaciens (strain CN-32 / ATCC BAA-453)).